We begin with the raw amino-acid sequence, 302 residues long: Sulfate adenylyltransferase subunit 2 (302 aa).

The protein belongs to the PAPS reductase family. CysD subfamily. As to quaternary structure, heterodimer composed of CysD, the smaller subunit, and CysN.

The enzyme catalyses sulfate + ATP + H(+) = adenosine 5'-phosphosulfate + diphosphate. The protein operates within sulfur metabolism; hydrogen sulfide biosynthesis; sulfite from sulfate: step 1/3. With CysN forms the ATP sulfurylase (ATPS) that catalyzes the adenylation of sulfate producing adenosine 5'-phosphosulfate (APS) and diphosphate, the first enzymatic step in sulfur assimilation pathway. APS synthesis involves the formation of a high-energy phosphoric-sulfuric acid anhydride bond driven by GTP hydrolysis by CysN coupled to ATP hydrolysis by CysD. The sequence is that of Sulfate adenylyltransferase subunit 2 from Proteus mirabilis (strain HI4320).